The primary structure comprises 470 residues: MSAYALSQSHRQLTEGHLKDTDPEVDQIIKDEIDRQQHSIVLIASENFTTTAVFDALGTPMCNKYSEGYPGARYYGGNEHIDRMELLCQERALKAFGLTPDKWGVNVQTLSGSPANLQVYQAIMKPHERLMGLDLPHGGHLSHGYQTDSRKISAVSTYFETMPYRVDLETGLIDYDMLEKTAVLYRPKVLVAGTSAYCRLIDYKRMREIADKVGAYLVVDMAHISGLIAAGVIPSPFEYADIVTTTTHKSLRGPRGAMIFFRRGVRSVNPKTGQEILYDLENPINFSVFPGHQGGPHNHTIAALATALKQANTPEFKEYQEQVLKNAKALESEFTKKGYKLVSDGTDSHMVLVSLKDKQIDGARVETVCEKINIALNKNSIPGDKSALVPGGVRIGAPAMTTRGLGEEDFKKIVSYIDFAVNYAKEVQSQLPKDANKLKDFKNAVSGDSEKLKAVRDEIYQWAGSFPLAV.

The segment covering 1-11 (MSAYALSQSHR) has biased composition (polar residues). The disordered stretch occupies residues 1-23 (MSAYALSQSHRQLTEGHLKDTDP). Ser2 carries the post-translational modification N-acetylserine. Over residues 12 to 23 (QLTEGHLKDTDP) the composition is skewed to basic and acidic residues. An N6-(pyridoxal phosphate)lysine modification is found at Lys249.

This sequence belongs to the SHMT family. As to quaternary structure, homotetramer. Pyridoxal 5'-phosphate serves as cofactor.

The protein resides in the cytoplasm. The catalysed reaction is (6R)-5,10-methylene-5,6,7,8-tetrahydrofolate + glycine + H2O = (6S)-5,6,7,8-tetrahydrofolate + L-serine. The protein operates within one-carbon metabolism; tetrahydrofolate interconversion. Functionally, interconversion of serine and glycine. The sequence is that of Serine hydroxymethyltransferase, cytosolic (SHM2) from Candida albicans (strain SC5314 / ATCC MYA-2876) (Yeast).